Here is a 64-residue protein sequence, read N- to C-terminus: GRCSACAYPAARLRKYNWSVKALRRKTTGTGRMRYLRNVPRRFKTNFREGTEAAPRKKGTAAAS.

The C4-type zinc finger occupies 1-6; it reads GRCSAC. Zn(2+)-binding residues include Cys3 and Cys6.

This sequence belongs to the eukaryotic ribosomal protein eL37 family. Zn(2+) serves as cofactor.

Functionally, binds to the 23S rRNA. In Solanum lycopersicum (Tomato), this protein is Large ribosomal subunit protein eL37 (RPL37).